The following is a 463-amino-acid chain: Chromosomal replication initiator protein DnaA (463 aa).

A domain I, interacts with DnaA modulators region spans residues 1–83 (MSTNQIILTD…LQLFQHYNNT (83 aa)). The segment at 83-124 (TIKSIEIITKELPGTTQTVTELPTKTFADIGSSELNSENIFS) is domain II. The segment at 125–343 (TLDVRFTFDN…GALNKVIAHS (219 aa)) is domain III, AAA+ region. 4 residues coordinate ATP: Gly171, Gly173, Lys174, and Thr175. The tract at residues 344-463 (NFTLKEITLE…IHLLMKILQN (120 aa)) is domain IV, binds dsDNA.

Belongs to the DnaA family. As to quaternary structure, oligomerizes as a right-handed, spiral filament on DNA at oriC.

The protein resides in the cytoplasm. Its function is as follows. Plays an essential role in the initiation and regulation of chromosomal replication. ATP-DnaA binds to the origin of replication (oriC) to initiate formation of the DNA replication initiation complex once per cell cycle. Binds the DnaA box (a 9 base pair repeat at the origin) and separates the double-stranded (ds)DNA. Forms a right-handed helical filament on oriC DNA; dsDNA binds to the exterior of the filament while single-stranded (ss)DNA is stabiized in the filament's interior. The ATP-DnaA-oriC complex binds and stabilizes one strand of the AT-rich DNA unwinding element (DUE), permitting loading of DNA polymerase. After initiation quickly degrades to an ADP-DnaA complex that is not apt for DNA replication. Binds acidic phospholipids. In Rickettsia africae (strain ESF-5), this protein is Chromosomal replication initiator protein DnaA.